Consider the following 370-residue polypeptide: Putative FBD-associated F-box protein At1g50980 (370 aa).

The F-box domain maps to 31 to 77; the sequence is IRTISEFPDKVLLKILSLLPSKDVVATGVLSKRWRSLWKDVKTFRTS. The region spanning 292–343 is the FBD domain; that stretch reads LMGNQPDLIPKSLSSHLEILEWRQYNDTAQEREAAKYILANASGLRKATFYT.

In Arabidopsis thaliana (Mouse-ear cress), this protein is Putative FBD-associated F-box protein At1g50980.